We begin with the raw amino-acid sequence, 473 residues long: MKILYSQRRFYHVEMPFNNRIEFAGRSIESTGYAWWAGNARLINVSGKLLGAHVAHAGLIVFWTGAMTLFEVAHFLPEKPLYEQGCILLPHLATLGWGVGPTGEIIDTYPYFVIGVLHLVSSAVLGFGGLYHSLIGPEILEESYPFFGYDWRDKNKMTTILGIHLILLGIGAFLLVIKAMFFGGVYDTWAPGGGDVRYINNPTLNPLVIFGYLLKSPFGGDGWIISVNNMEDLIGGHIWIGLICIGGGIWHILTKPFGWARRAFVWSGEAYLSYSLAALSLMGFIACIYVWYNNTAYPSEFYGPTGPEASQAQAFTFLVRDQRLGENVASAQGPTGLGKYLMRSPSGEVIFGGETMRFWDLRAPWLEPLRGPNGLDLNKIKNDIQPWQERRAAEYMTHAPLGSINSVGGVATEINSFNYVSPRSWLTTSHFVLGFFLFVAHLWHAGRARAAAAGFEKGINRENEPVLSMKLID.

A propeptide spanning residues 1-14 is cleaved from the precursor; that stretch reads MKILYSQRRFYHVE. Helical transmembrane passes span 69–93, 134–155, 178–200, 255–275, and 291–312; these read LFEV…PHLA, LIGP…RDKN, KAMF…RYIN, KPFG…LSYS, and WYNN…ASQA. E367 provides a ligand contact to [CaMn4O5] cluster. A helical membrane pass occupies residues 447–471; the sequence is RARAAAAGFEKGINRENEPVLSMKL.

The protein belongs to the PsbB/PsbC family. PsbC subfamily. PSII is composed of 1 copy each of membrane proteins PsbA, PsbB, PsbC, PsbD, PsbE, PsbF, PsbH, PsbI, PsbJ, PsbK, PsbL, PsbM, PsbT, PsbY, PsbZ, Psb30/Ycf12, at least 3 peripheral proteins of the oxygen-evolving complex and a large number of cofactors. It forms dimeric complexes. Binds multiple chlorophylls and provides some of the ligands for the Ca-4Mn-5O cluster of the oxygen-evolving complex. It may also provide a ligand for a Cl- that is required for oxygen evolution. PSII binds additional chlorophylls, carotenoids and specific lipids. is required as a cofactor.

The protein localises to the plastid. The protein resides in the chloroplast thylakoid membrane. Its function is as follows. One of the components of the core complex of photosystem II (PSII). It binds chlorophyll and helps catalyze the primary light-induced photochemical processes of PSII. PSII is a light-driven water:plastoquinone oxidoreductase, using light energy to abstract electrons from H(2)O, generating O(2) and a proton gradient subsequently used for ATP formation. The polypeptide is Photosystem II CP43 reaction center protein (Galdieria sulphuraria (Red alga)).